We begin with the raw amino-acid sequence, 412 residues long: Na(+)-translocating NADH-quinone reductase subunit B (412 aa).

3 consecutive transmembrane segments (helical) span residues 57 to 77 (MILV…NVGL), 127 to 147 (VFFL…EVLF), and 163 to 183 (SILF…ALGI). FMN phosphoryl threonine is present on Thr-236. 5 helical membrane passes run 270–290 (GSIG…ILFG), 297–317 (IVAG…VIGS), 322–342 (MFSM…GMMF), 358–378 (WSYG…NPAY), and 381–401 (GMML…YLVV).

The protein belongs to the NqrB/RnfD family. Composed of six subunits; NqrA, NqrB, NqrC, NqrD, NqrE and NqrF. The cofactor is FMN.

It localises to the cell inner membrane. It carries out the reaction a ubiquinone + n Na(+)(in) + NADH + H(+) = a ubiquinol + n Na(+)(out) + NAD(+). Functionally, NQR complex catalyzes the reduction of ubiquinone-1 to ubiquinol by two successive reactions, coupled with the transport of Na(+) ions from the cytoplasm to the periplasm. NqrA to NqrE are probably involved in the second step, the conversion of ubisemiquinone to ubiquinol. This chain is Na(+)-translocating NADH-quinone reductase subunit B, found in Klebsiella pneumoniae (strain 342).